The chain runs to 567 residues: Formate--tetrahydrofolate ligase (567 aa).

76-83 contributes to the ATP binding site; it reads TPAGEGKT.

Belongs to the formate--tetrahydrofolate ligase family.

It catalyses the reaction (6S)-5,6,7,8-tetrahydrofolate + formate + ATP = (6R)-10-formyltetrahydrofolate + ADP + phosphate. It participates in one-carbon metabolism; tetrahydrofolate interconversion. This is Formate--tetrahydrofolate ligase from Sinorhizobium medicae (strain WSM419) (Ensifer medicae).